A 242-amino-acid chain; its full sequence is Biosynthetic peptidoglycan transglycosylase (242 aa).

A helical membrane pass occupies residues 19–39 (ILAALAVFWGGGIALFSVVPV).

It belongs to the glycosyltransferase 51 family.

It is found in the cell inner membrane. It carries out the reaction [GlcNAc-(1-&gt;4)-Mur2Ac(oyl-L-Ala-gamma-D-Glu-L-Lys-D-Ala-D-Ala)](n)-di-trans,octa-cis-undecaprenyl diphosphate + beta-D-GlcNAc-(1-&gt;4)-Mur2Ac(oyl-L-Ala-gamma-D-Glu-L-Lys-D-Ala-D-Ala)-di-trans,octa-cis-undecaprenyl diphosphate = [GlcNAc-(1-&gt;4)-Mur2Ac(oyl-L-Ala-gamma-D-Glu-L-Lys-D-Ala-D-Ala)](n+1)-di-trans,octa-cis-undecaprenyl diphosphate + di-trans,octa-cis-undecaprenyl diphosphate + H(+). Its pathway is cell wall biogenesis; peptidoglycan biosynthesis. Its function is as follows. Peptidoglycan polymerase that catalyzes glycan chain elongation from lipid-linked precursors. This chain is Biosynthetic peptidoglycan transglycosylase, found in Salmonella heidelberg (strain SL476).